Reading from the N-terminus, the 123-residue chain is Protein Wnt-7(I) (123 aa).

Residue Ser1 is the site of O-palmitoleoyl serine; by PORCN attachment. Cysteines 89 and 104 form a disulfide. An N-linked (GlcNAc...) asparagine glycan is attached at Asn90. The Microbody targeting signal signature appears at 121–123 (CKF).

It belongs to the Wnt family. In terms of processing, palmitoleoylation is required for efficient binding to frizzled receptors. Depalmitoleoylation leads to Wnt signaling pathway inhibition.

It is found in the secreted. The protein localises to the extracellular space. The protein resides in the extracellular matrix. Its function is as follows. Ligand for members of the frizzled family of seven transmembrane receptors. Probable developmental protein. May be a signaling molecule which affects the development of discrete regions of tissues. Is likely to signal over only few cell diameters. This is Protein Wnt-7(I) (WNT-7(I)) from Eptatretus stoutii (Pacific hagfish).